The chain runs to 37 residues: Large ribosomal subunit protein bL36 (37 aa).

The protein belongs to the bacterial ribosomal protein bL36 family.

This Shewanella frigidimarina (strain NCIMB 400) protein is Large ribosomal subunit protein bL36.